A 260-amino-acid chain; its full sequence is UPF0246 protein APJL_0596 (260 aa).

The protein belongs to the UPF0246 family.

The sequence is that of UPF0246 protein APJL_0596 from Actinobacillus pleuropneumoniae serotype 3 (strain JL03).